The sequence spans 67 residues: Large ribosomal subunit protein eL24 (67 aa).

Zn(2+) is bound by residues Cys-7, Cys-10, Cys-33, and Cys-37. The C4-type zinc finger occupies 7–37 (CSYCGKEFEPGTGKMYVRNDGRVYFFCSRKC).

This sequence belongs to the eukaryotic ribosomal protein eL24 family. As to quaternary structure, part of the 50S ribosomal subunit. Forms a cluster with proteins L3 and L14. Requires Zn(2+) as cofactor.

Its function is as follows. Binds to the 23S rRNA. The protein is Large ribosomal subunit protein eL24 of Thermococcus sibiricus (strain DSM 12597 / MM 739).